The primary structure comprises 405 residues: Endo-1,4-beta-xylanase 5 (405 aa).

The signal sequence occupies residues 1–22 (MTRLATLITLAGLLAVSPGAYA). 2 N-linked (GlcNAc...) asparagine glycosylation sites follow: asparagine 27 and asparagine 69. In terms of domain architecture, GH10 spans 32-352 (STGAEGLNSL…KPAYTSVSSL (321 aa)). Catalysis depends on glutamate 166, which acts as the Proton donor. The N-linked (GlcNAc...) asparagine glycan is linked to asparagine 171. The active-site Nucleophile is glutamate 273. Residues cysteine 302 and cysteine 308 are joined by a disulfide bond. Glycine 380 carries the GPI-anchor amidated glycine lipid modification. Positions 381–405 (AGRETVSIAGLTLALSSLAFGMFML) are cleaved as a propeptide — removed in mature form.

It belongs to the glycosyl hydrolase 10 (cellulase F) family.

Its subcellular location is the cell membrane. The protein localises to the secreted. The catalysed reaction is Endohydrolysis of (1-&gt;4)-beta-D-xylosidic linkages in xylans.. It functions in the pathway glycan degradation; xylan degradation. In terms of biological role, endo-1,4-beta-xylanase involved in the hydrolysis of xylan, a major structural heterogeneous polysaccharide found in plant biomass representing the second most abundant polysaccharide in the biosphere, after cellulose. The protein is Endo-1,4-beta-xylanase 5 (XYL5) of Pyricularia grisea (Crabgrass-specific blast fungus).